The primary structure comprises 532 residues: D-arabinono-1,4-lactone oxidase (532 aa).

The FAD-binding PCMH-type domain maps to 25–199 (YSARPRLYFQ…VRATIRVVPA (175 aa)). His-62 is subject to Pros-8alpha-FAD histidine.

It belongs to the oxygen-dependent FAD-linked oxidoreductase family. Requires FAD as cofactor.

It localises to the mitochondrion membrane. It carries out the reaction D-arabinono-1,4-lactone + O2 = dehydro-D-arabinono-1,4-lactone + H2O2 + H(+). It participates in cofactor biosynthesis; D-erythroascorbate biosynthesis; dehydro-D-arabinono-1,4-lactone from D-arabinose: step 2/2. The polypeptide is D-arabinono-1,4-lactone oxidase (ALO1) (Eremothecium gossypii (strain ATCC 10895 / CBS 109.51 / FGSC 9923 / NRRL Y-1056) (Yeast)).